A 438-amino-acid chain; its full sequence is MPLVIVAIGVILLLLLMIRFKMNGFIALVLVALAVGLMQGMPLDKVIGSIKAGVGGTLGSLALIMGFGAMLGKMLADCGGAQRIATTLIAKFGKKHIQWAVVLTGFTVGFALFYEVGFVLMLPLVFTIAASANIPLLYVGVPMAAALSVTHGFLPPHPGPTAIATIFNADMGKTLLYGTILAIPTVILAGPVYARVLKGIDKPIPEGLYSAKTFSEEEMPSFGVSVWTSLVPVVLMAMRAIAEMILPKGHAFLPVAEFLGDPVMATLIAVLIAMFTFGLNRGRSMDQINDTLVSSIKIIAMMLLIIGGGGAFKQVLVDSGVDKYIASMMHETNISPLLMAWSIAAVLRIALGSATVAAITAGGIAAPLIATTGVSPELMVIAVGSGSVIFSHVNDPGFWLFKEYFNLTIGETIKSWSMLETIISVCGLVGCLLLNMVI.

The next 13 helical transmembrane spans lie at 2–22, 23–43, 52–72, 108–128, 134–154, 174–194, 222–242, 258–278, 292–312, 327–347, 349–369, 370–390, and 418–438; these read PLVIVAIGVILLLLLMIRFKM, NGFIALVLVALAVGLMQGMPL, AGVGGTLGSLALIMGFGAMLG, VGFALFYEVGFVLMLPLVFTI, IPLLYVGVPMAAALSVTHGFL, TLLYGTILAIPTVILAGPVYA, FGVSVWTSLVPVVLMAMRAIA, FLGDPVMATLIAVLIAMFTFG, LVSSIKIIAMMLLIIGGGGAF, SMMHETNISPLLMAWSIAAVL, IALGSATVAAITAGGIAAPLI, ATTGVSPELMVIAVGSGSVIF, and MLETIISVCGLVGCLLLNMVI.

The protein belongs to the GntP permease family.

It localises to the cell inner membrane. Its pathway is carbohydrate acid metabolism; D-gluconate degradation. Part of the gluconate utilization system Gnt-I; high-affinity intake of gluconate. This is High-affinity gluconate transporter (gntT) from Escherichia coli (strain K12).